We begin with the raw amino-acid sequence, 83 residues long: UPF0297 protein CLK_1948 (83 aa).

It belongs to the UPF0297 family.

This Clostridium botulinum (strain Loch Maree / Type A3) protein is UPF0297 protein CLK_1948.